Here is a 121-residue protein sequence, read N- to C-terminus: Large ribosomal subunit protein uL18 (121 aa).

Belongs to the universal ribosomal protein uL18 family. As to quaternary structure, part of the 50S ribosomal subunit; part of the 5S rRNA/L5/L18/L25 subcomplex. Contacts the 5S and 23S rRNAs.

In terms of biological role, this is one of the proteins that bind and probably mediate the attachment of the 5S RNA into the large ribosomal subunit, where it forms part of the central protuberance. The protein is Large ribosomal subunit protein uL18 of Burkholderia mallei (strain NCTC 10247).